The chain runs to 357 residues: 3-isopropylmalate dehydrogenase (357 aa).

The substrate site is built by Arg97, Arg107, Arg135, and Asp224. The Mg(2+) site is built by Asp224, Asp248, and Asp252. 282-294 (GSAPDIAGQDKAN) contacts NAD(+).

It belongs to the isocitrate and isopropylmalate dehydrogenases family. LeuB type 1 subfamily. As to quaternary structure, homodimer. Mg(2+) serves as cofactor. Requires Mn(2+) as cofactor.

The protein resides in the cytoplasm. It carries out the reaction (2R,3S)-3-isopropylmalate + NAD(+) = 4-methyl-2-oxopentanoate + CO2 + NADH. It participates in amino-acid biosynthesis; L-leucine biosynthesis; L-leucine from 3-methyl-2-oxobutanoate: step 3/4. Catalyzes the oxidation of 3-carboxy-2-hydroxy-4-methylpentanoate (3-isopropylmalate) to 3-carboxy-4-methyl-2-oxopentanoate. The product decarboxylates to 4-methyl-2 oxopentanoate. The protein is 3-isopropylmalate dehydrogenase of Parasynechococcus marenigrum (strain WH8102).